The primary structure comprises 297 residues: MILKLEVGVGLKNLNGKWGLDSSKEFYWEPDVEGGYRVYKVKSVIIEHQSLYQKIDIVELETWGKSLFLDGSLQSTESDEFIYHELLVHPAMRVHPSPKRVLICGVGEGKSVREVLKYPTVKEVIGVDIDKEVVALCQKHLGKTPIDDKRVRLVYQDVAEFIKNYRGEPFDVAIVDVTDDLDGPARSVHQLDFYKRLYEILGEKATVVVQGTSAFSKVKNVGFCHIYEILKEVFPFVIPYADYIPSFSDLWTFFVALKGIKDLTPRHEIPRDLKYYDEYTNERIFTLAKPLREKLGV.

Residues 26–258 enclose the PABS domain; that stretch reads FYWEPDVEGG…DLWTFFVALK (233 aa). Gln53 serves as a coordination point for S-methyl-5'-thioadenosine. Residues His84 and Glu108 each contribute to the spermidine site. S-methyl-5'-thioadenosine-binding positions include Asp128 and 157 to 158; that span reads DV. The Proton acceptor role is filled by Asp176. Pro184 contributes to the S-methyl-5'-thioadenosine binding site.

Belongs to the spermidine/spermine synthase family. As to quaternary structure, homodimer or homotetramer.

The protein localises to the cytoplasm. It carries out the reaction S-adenosyl 3-(methylsulfanyl)propylamine + putrescine = S-methyl-5'-thioadenosine + spermidine + H(+). The protein operates within amine and polyamine biosynthesis; spermidine biosynthesis; spermidine from putrescine: step 1/1. Catalyzes the irreversible transfer of a propylamine group from the amino donor S-adenosylmethioninamine (decarboxy-AdoMet) to putrescine (1,4-diaminobutane) to yield spermidine. The sequence is that of Polyamine aminopropyltransferase 2 from Caldanaerobacter subterraneus subsp. tengcongensis (strain DSM 15242 / JCM 11007 / NBRC 100824 / MB4) (Thermoanaerobacter tengcongensis).